Here is a 384-residue protein sequence, read N- to C-terminus: Anhydro-N-acetylmuramic acid kinase (384 aa).

9-16 serves as a coordination point for ATP; that stretch reads GTSVDGID.

It belongs to the anhydro-N-acetylmuramic acid kinase family.

It carries out the reaction 1,6-anhydro-N-acetyl-beta-muramate + ATP + H2O = N-acetyl-D-muramate 6-phosphate + ADP + H(+). The protein operates within amino-sugar metabolism; 1,6-anhydro-N-acetylmuramate degradation. It functions in the pathway cell wall biogenesis; peptidoglycan recycling. Its function is as follows. Catalyzes the specific phosphorylation of 1,6-anhydro-N-acetylmuramic acid (anhMurNAc) with the simultaneous cleavage of the 1,6-anhydro ring, generating MurNAc-6-P. Is required for the utilization of anhMurNAc either imported from the medium or derived from its own cell wall murein, and thus plays a role in cell wall recycling. This chain is Anhydro-N-acetylmuramic acid kinase, found in Rippkaea orientalis (strain PCC 8801 / RF-1) (Cyanothece sp. (strain PCC 8801)).